The following is a 435-amino-acid chain: Serine--tRNA ligase (435 aa).

Thr242 to Glu244 provides a ligand contact to L-serine. Arg273–Glu275 provides a ligand contact to ATP. An L-serine-binding site is contributed by Glu296. Position 360 to 363 (Glu360 to Ser363) interacts with ATP. Ser396 contributes to the L-serine binding site.

The protein belongs to the class-II aminoacyl-tRNA synthetase family. Type-1 seryl-tRNA synthetase subfamily. As to quaternary structure, homodimer. The tRNA molecule binds across the dimer.

The protein resides in the cytoplasm. The enzyme catalyses tRNA(Ser) + L-serine + ATP = L-seryl-tRNA(Ser) + AMP + diphosphate + H(+). It catalyses the reaction tRNA(Sec) + L-serine + ATP = L-seryl-tRNA(Sec) + AMP + diphosphate + H(+). The protein operates within aminoacyl-tRNA biosynthesis; selenocysteinyl-tRNA(Sec) biosynthesis; L-seryl-tRNA(Sec) from L-serine and tRNA(Sec): step 1/1. Its function is as follows. Catalyzes the attachment of serine to tRNA(Ser). Is also able to aminoacylate tRNA(Sec) with serine, to form the misacylated tRNA L-seryl-tRNA(Sec), which will be further converted into selenocysteinyl-tRNA(Sec). This Vibrio cholerae serotype O1 (strain ATCC 39541 / Classical Ogawa 395 / O395) protein is Serine--tRNA ligase.